Consider the following 434-residue polypeptide: Putative nuclease OPG089 (434 aa).

The Mg(2+) site is built by D33, D74, E168, D170, D196, and D198.

Belongs to the XPG/RAD2 endonuclease family. FEN1 subfamily. Mg(2+) is required as a cofactor.

Its subcellular location is the virion. In terms of biological role, putative nuclease that seems to be required for double-strand break repair, homologous recombination, and production of full-length viral genomic DNA. This Homo sapiens (Human) protein is Putative nuclease OPG089 (OPG089).